A 596-amino-acid chain; its full sequence is Jacalin-related lectin 46 (596 aa).

The interval 1–20 is disordered; sequence MTERSEALGKDGNRRWDDKS. 4 consecutive Jacalin-type lectin domains span residues 2–143, 146–291, 294–439, and 446–592; these read TERS…YFTR, PTRI…YFTP, PTKS…HFYP, and AEKL…HVLP.

It belongs to the jacalin lectin family.

This is Jacalin-related lectin 46 (JAL46) from Arabidopsis thaliana (Mouse-ear cress).